A 333-amino-acid chain; its full sequence is D-fructose 1,6-bisphosphatase class 2/sedoheptulose 1,7-bisphosphatase (333 aa).

Aspartate 33, glutamate 57, aspartate 85, and glutamate 88 together coordinate Mn(2+). Residues 88 to 90, tyrosine 119, 164 to 166, and 186 to 188 contribute to the substrate site; these read EGT, RTR, and DGD. Glutamate 213 is a binding site for Mn(2+).

It belongs to the FBPase class 2 family. In terms of assembly, homotetramer. Requires Mn(2+) as cofactor.

It catalyses the reaction beta-D-fructose 1,6-bisphosphate + H2O = beta-D-fructose 6-phosphate + phosphate. The enzyme catalyses D-sedoheptulose 1,7-bisphosphate + H2O = D-sedoheptulose 7-phosphate + phosphate. It participates in carbohydrate biosynthesis; Calvin cycle. Its function is as follows. Catalyzes the hydrolysis of fructose 1,6-bisphosphate (Fru 1,6-P2) and sedoheptulose 1,7-bisphosphate (Sed 1,7-P2) to fructose 6-phosphate and sedoheptulose 7-phosphate, respectively. The protein is D-fructose 1,6-bisphosphatase class 2/sedoheptulose 1,7-bisphosphatase of Prochlorococcus marinus (strain MIT 9301).